The sequence spans 362 residues: NAD(P)H-quinone oxidoreductase subunit 1, chloroplastic (362 aa).

A run of 8 helical transmembrane segments spans residues 31–51 (WVPLPILSLVIVATLGVLVIV), 99–119 (WLFTLGPAVVVIPIFLAYLVV), 132–152 (IGIFFWIAISSIAPIGLLMSG), 178–198 (LAICVLSVCLLADSLSTVDIV), 206–226 (ILTWNIWRQPIGFVAFLIAAL), 268–288 (LVSGCFVTVLYLGGWHGPFAI), 303–323 (AFLGITWTLLKTFLFLFAAIL), and 336–356 (LLDLGWKFLLPVSLGNLLLTA).

Belongs to the complex I subunit 1 family. In terms of assembly, NDH is composed of at least 16 different subunits, 5 of which are encoded in the nucleus.

Its subcellular location is the plastid. It localises to the chloroplast thylakoid membrane. It carries out the reaction a plastoquinone + NADH + (n+1) H(+)(in) = a plastoquinol + NAD(+) + n H(+)(out). The catalysed reaction is a plastoquinone + NADPH + (n+1) H(+)(in) = a plastoquinol + NADP(+) + n H(+)(out). Its function is as follows. NDH shuttles electrons from NAD(P)H:plastoquinone, via FMN and iron-sulfur (Fe-S) centers, to quinones in the photosynthetic chain and possibly in a chloroplast respiratory chain. The immediate electron acceptor for the enzyme in this species is believed to be plastoquinone. Couples the redox reaction to proton translocation, and thus conserves the redox energy in a proton gradient. This Nephroselmis olivacea (Green alga) protein is NAD(P)H-quinone oxidoreductase subunit 1, chloroplastic.